The sequence spans 277 residues: Large ribosomal subunit protein uL2 (277 aa).

2 disordered regions span residues 24 to 55 (ITTSTPEKSLLRPLKKKAGRNNQGKLTVRHHG) and 221 to 277 (RGSV…RKKK).

This sequence belongs to the universal ribosomal protein uL2 family. As to quaternary structure, part of the 50S ribosomal subunit. Forms a bridge to the 30S subunit in the 70S ribosome.

In terms of biological role, one of the primary rRNA binding proteins. Required for association of the 30S and 50S subunits to form the 70S ribosome, for tRNA binding and peptide bond formation. It has been suggested to have peptidyltransferase activity; this is somewhat controversial. Makes several contacts with the 16S rRNA in the 70S ribosome. This is Large ribosomal subunit protein uL2 from Listeria innocua serovar 6a (strain ATCC BAA-680 / CLIP 11262).